Here is a 225-residue protein sequence, read N- to C-terminus: UPF0758 protein Vapar_4033 (225 aa).

The 123-residue stretch at 103 to 225 (VFDSPGTVKQ…SYSMAEKGLL (123 aa)) folds into the MPN domain. Zn(2+) is bound by residues histidine 174, histidine 176, and aspartate 187. Positions 174–187 (HNHPSGSIEPSRAD) match the JAMM motif motif.

Belongs to the UPF0758 family.

In Variovorax paradoxus (strain S110), this protein is UPF0758 protein Vapar_4033.